The following is a 160-amino-acid chain: Ribosomal RNA large subunit methyltransferase H (160 aa).

S-adenosyl-L-methionine contacts are provided by residues L77, G109, and 128 to 133 (FSRLTF).

It belongs to the RNA methyltransferase RlmH family. In terms of assembly, homodimer.

The protein localises to the cytoplasm. It catalyses the reaction pseudouridine(1915) in 23S rRNA + S-adenosyl-L-methionine = N(3)-methylpseudouridine(1915) in 23S rRNA + S-adenosyl-L-homocysteine + H(+). Specifically methylates the pseudouridine at position 1915 (m3Psi1915) in 23S rRNA. This Desulfitobacterium hafniense (strain DSM 10664 / DCB-2) protein is Ribosomal RNA large subunit methyltransferase H.